We begin with the raw amino-acid sequence, 520 residues long: MLARGLPLRSALVKACPPLLNTGREGWGHHRVGTGEGAGISTRTPRPYSEIPSPGDNGWINLYHFWRKKSSQRIHFRHIENFQKYGPIYREKLGNLESVYIIHPEDVAHLFKFEGSYPQRYDIPPWLAYHQYYQKPIGVLFKKSGAWKKDRVVLNTEVMAPEAIKNFIPLLNPVSQDFVSLLRKRIQQQGSGKFAGDIKEDLFHFAFESITNVMFGERLGMLEDTVNTEAQKFIDAVYKMFHTSVPLLNLPPELYRLFRTKTWRDHVAAWDTIFNKAEKYTEIFYQDLRQKTEFRNYPGILYHLLKSEKMLLEDVKANITEMLAGGVDTTSMTLQWHLYEMARSLNVQEMLREEVLNARRQAEGDISKMLQMVPLLKASIKETLRLHPISVTLQRYPESDLVLQDYLIPAKTLVQVAIYAMGRDPAFFSNPDKFDPTRWLGKDKDLIHFRNLGFGWGVRQCVGRRIAELEMTLFLIHILENFKIEMQQIGDVNTIFNLILTPDKPIFLVFRPFNQDPPQA.

The transit peptide at 1–39 directs the protein to the mitochondrion; that stretch reads MLARGLPLRSALVKACPPLLNTGREGWGHHRVGTGEGAG. The segment at 27–48 is disordered; that stretch reads WGHHRVGTGEGAGISTRTPRPY. Cys-461 contributes to the heme binding site.

It belongs to the cytochrome P450 family. As to quaternary structure, interacts with FDX1/adrenodoxin. Heme is required as a cofactor.

It localises to the mitochondrion inner membrane. The enzyme catalyses 6 reduced [adrenodoxin] + cholesterol + 3 O2 + 6 H(+) = 4-methylpentanal + pregnenolone + 6 oxidized [adrenodoxin] + 4 H2O. It catalyses the reaction 2 reduced [adrenodoxin] + cholesterol + O2 + 2 H(+) = (22R)-hydroxycholesterol + 2 oxidized [adrenodoxin] + H2O. It carries out the reaction (22R)-hydroxycholesterol + 2 reduced [adrenodoxin] + O2 + 2 H(+) = (20R,22R)-20,22-dihydroxycholesterol + 2 oxidized [adrenodoxin] + H2O. The catalysed reaction is (20R,22R)-20,22-dihydroxycholesterol + 2 reduced [adrenodoxin] + O2 + 2 H(+) = 4-methylpentanal + pregnenolone + 2 oxidized [adrenodoxin] + 2 H2O. It functions in the pathway lipid metabolism; C21-steroid hormone metabolism. It participates in steroid metabolism; cholesterol metabolism. In terms of biological role, a cytochrome P450 monooxygenase that catalyzes the side-chain hydroxylation and cleavage of cholesterol to pregnenolone, the precursor of most steroid hormones. Catalyzes three sequential oxidation reactions of cholesterol, namely the hydroxylation at C22 followed with the hydroxylation at C20 to yield 20R,22R-hydroxycholesterol that is further cleaved between C20 and C22 to yield the C21-steroid pregnenolone and 4-methylpentanal. Mechanistically, uses molecular oxygen inserting one oxygen atom into a substrate and reducing the second into a water molecule. Two electrons are provided by NADPH via a two-protein mitochondrial transfer system comprising flavoprotein FDXR (adrenodoxin/ferredoxin reductase) and nonheme iron-sulfur protein FDX1 or FDX2 (adrenodoxin/ferredoxin). In Capra hircus (Goat), this protein is Cholesterol side-chain cleavage enzyme, mitochondrial.